Reading from the N-terminus, the 399-residue chain is S-adenosylmethionine synthase (399 aa).

Residue histidine 17 coordinates ATP. A Mg(2+)-binding site is contributed by aspartate 19. Glutamate 52 lines the K(+) pocket. Residues glutamate 65 and glutamine 109 each contribute to the L-methionine site. The flexible loop stretch occupies residues 109 to 119; it reads QSADIAQGVDA. ATP is bound by residues 177–179, 243–244, aspartate 252, 258–259, alanine 275, and lysine 279; these read DSK, KF, and RK. Residue aspartate 252 participates in L-methionine binding. L-methionine is bound at residue lysine 283.

This sequence belongs to the AdoMet synthase family. Homotetramer; dimer of dimers. Mg(2+) is required as a cofactor. K(+) serves as cofactor.

The protein resides in the cytoplasm. The catalysed reaction is L-methionine + ATP + H2O = S-adenosyl-L-methionine + phosphate + diphosphate. Its pathway is amino-acid biosynthesis; S-adenosyl-L-methionine biosynthesis; S-adenosyl-L-methionine from L-methionine: step 1/1. Its function is as follows. Catalyzes the formation of S-adenosylmethionine (AdoMet) from methionine and ATP. The overall synthetic reaction is composed of two sequential steps, AdoMet formation and the subsequent tripolyphosphate hydrolysis which occurs prior to release of AdoMet from the enzyme. The protein is S-adenosylmethionine synthase of Bradyrhizobium sp. (strain ORS 278).